The following is a 380-amino-acid chain: Guanine nucleotide-binding protein subunit beta (380 aa).

WD repeat units lie at residues 64 to 94 (GHSGKVYSLDWTPEKNWIVSASQDGRLIVWN), 106 to 136 (LHCPWVMTCAFAPNGQSVACGGLDSACSIFN), 155 to 186 (GHKGYVSSCQYVPDQETRLITSSGDQTCVLWD), 203 to 234 (GHTADVLSLSINSSNSNMFVSGSCDATVRLWD), 247 to 277 (GHEGDINSVKFFPDGQRFGTGSDDGTCRLFD), 296 to 326 (NELPTVTSIAFSISGRLLFAGYSNGDCYVWD), and 342 to 372 (SHEGRISCLGLSSDGSALCTGSWDKNLKIWA).

Belongs to the WD repeat G protein beta family. G proteins are composed of 3 units, alpha, beta and gamma. Interacts with the gamma subunits RGG1 and RGG2.

It is found in the cell membrane. Guanine nucleotide-binding proteins (G proteins) are involved as modulators or transducers in various transmembrane signaling systems. The beta and gamma chains are required for the GTPase activity, for replacement of GDP by GTP, and for G protein-effector interaction. This is Guanine nucleotide-binding protein subunit beta from Oryza sativa subsp. japonica (Rice).